We begin with the raw amino-acid sequence, 263 residues long: Interleukin-15 receptor subunit alpha (263 aa).

Residues methionine 1–proline 32 form the signal peptide. The Extracellular segment spans residues glycine 33–lysine 205. The region spanning threonine 34–arginine 98 is the Sushi domain. Cystine bridges form between cysteine 36/cysteine 78 and cysteine 62/cysteine 96. N-linked (GlcNAc...) asparagine glycosylation is present at asparagine 51. The segment covering threonine 113–proline 135 has biased composition (low complexity). The interval threonine 113–alanine 178 is disordered. Polar residues predominate over residues lysine 136–threonine 145. The segment covering threonine 154–histidine 169 has biased composition (low complexity). A helical transmembrane segment spans residues valine 206–tryptophan 226. Over tyrosine 227–alanine 263 the chain is Cytoplasmic.

The interleukin-15 receptor IL15R is a heterotrimer of IL15RA, IL2RB and IL2RG. IL15RA also self-associates. Interacts with SYK. N-glycosylated and O-glycosylated. In terms of processing, a soluble form (sIL-15RA) arises from proteolytic shedding of the membrane-anchored receptor. It also binds IL15 and thus interferes with IL15 binding to the membrane receptor. As to expression, widely expressed.

The protein localises to the membrane. Its subcellular location is the nucleus membrane. It localises to the cell surface. It is found in the secreted. The protein resides in the extracellular space. Functionally, high-affinity receptor for interleukin-15. Can signal both in cis and trans where IL15R from one subset of cells presents IL15 to neighboring IL2RG-expressing cells. In neutrophils, binds and activates kinase SYK in response to IL15 stimulation. In neutrophils, required for IL15-induced phagocytosis in a SYK-dependent manner. This Mus musculus (Mouse) protein is Interleukin-15 receptor subunit alpha (Il15ra).